Reading from the N-terminus, the 577-residue chain is Arginine--tRNA ligase (577 aa).

Residues 122–132 (PNVAKEMHVGH) carry the 'HIGH' region motif.

It belongs to the class-I aminoacyl-tRNA synthetase family. Monomer.

Its subcellular location is the cytoplasm. The catalysed reaction is tRNA(Arg) + L-arginine + ATP = L-arginyl-tRNA(Arg) + AMP + diphosphate. The polypeptide is Arginine--tRNA ligase (Salmonella schwarzengrund (strain CVM19633)).